The sequence spans 835 residues: MAASAAAASAAAASAASGSPGPGEGSAGGEKRSTAPSAAASASASAAASSPAGGGAEALELLEHCGVCRERLRPEREPRLLPCLHSACSACLGPAAPAAANSSGDGGAAGDGTVVDCPVCKQQCFSKDIVENYFMRDSGSKAATDAQDANQCCTSCEDNAPATSYCVECSEPLCETCVEAHQRVKYTKDHTVRSTGPAKSRDGERTVYCNVHKHEPLVLFCESCDTLTCRDCQLNAHKDHQYQFLEDAVRNQRKLLASLVKRLGDKHATLQKSTKEVRSSIRQVSDVQKRVQVDVKMAILQIMKELNKRGRVLVNDAQKVTEGQQERLERQHWTMTKIQKHQEHILRFASWALESDNNTALLLSKKLIYFQLHRALKMIVDPVEPHGEMKFQWDLNAWTKSAEAFGKIVAERPGTNSTGPAPMAPPRAPGPLSKQGSGSSQPMEVQEGYGFGSGDDPYSSAEPHVSGVKRSRSGEGEVSGLMRKVPRVSLERLDLDLTADSQPPVFKVFPGSTTEDYNLIVIERGAAAAATGQPGTAPAGTPGAPPLAGMAIVKEEETEAAIGAPPTATEGPETKPVLMALAEGPGAEGPRLASPSGSTSSGLEVVAPEGTSAPGGGPGTLDDSATICRVCQKPGDLVMCNQCEFCFHLDCHLPALQDVPGEEWSCSLCHVLPDLKEEDGSLSLDGADSTGVVAKLSPANQRKCERVLLALFCHEPCRPLHQLATDSTFSLDQPGGTLDLTLIRARLQEKLSPPYSSPQEFAQDVGRMFKQFNKLTEDKADVQSIIGLQRFFETRMNEAFGDTKFSAVLVEPPPMSLPGAGLSSQELSGGPGDGP.

Residues 1-19 show a composition bias toward low complexity; that stretch reads MAASAAAASAAAASAASGS. The tract at residues 1–49 is disordered; it reads MAASAAAASAAAASAASGSPGPGEGSAGGEKRSTAPSAAASASASAAAS. Ala2 carries the post-translational modification N-acetylalanine. A phosphoserine mark is found at Ser19 and Ser26. Lys31 is covalently cross-linked (Glycyl lysine isopeptide (Lys-Gly) (interchain with G-Cter in SUMO2)). Residues 35-49 are compositionally biased toward low complexity; that stretch reads APSAAASASASAAAS. Ser50 is modified (phosphoserine). The RING-type zinc-finger motif lies at 65–121; sequence CGVCRERLRPEREPRLLPCLHSACSACLGPAAPAAANSSGDGGAAGDGTVVDCPVCK. Residues 65–376 are RBCC domain; that stretch reads CGVCRERLRP…LIYFQLHRAL (312 aa). Lys127 is covalently cross-linked (Glycyl lysine isopeptide (Lys-Gly) (interchain with G-Cter in SUMO2)). At Ser138 the chain carries Phosphoserine. Residues 148–195 form a B box-type 1; atypical zinc finger; that stretch reads DANQCCTSCEDNAPATSYCVECSEPLCETCVEAHQRVKYTKDHTVRST. Positions 153, 156, 177, and 181 each coordinate Zn(2+). Lys199 participates in a covalent cross-link: Glycyl lysine isopeptide (Lys-Gly) (interchain with G-Cter in SUMO2). The B box-type 2 zinc-finger motif lies at 204–245; it reads ERTVYCNVHKHEPLVLFCESCDTLTCRDCQLNAHKDHQYQFL. Zn(2+) contacts are provided by Cys209, His212, Cys232, and His237. Residues 246–376 form a leucine zipper alpha helical coiled-coil region region; that stretch reads EDAVRNQRKL…LIYFQLHRAL (131 aa). The tract at residues 247 to 376 is interaction with MAGEC2; the sequence is DAVRNQRKLL…LIYFQLHRAL (130 aa). Glycyl lysine isopeptide (Lys-Gly) (interchain with G-Cter in SUMO2) cross-links involve residues Lys254 and Lys261. Lys266 carries the post-translational modification N6-acetyllysine. Lys272 is covalently cross-linked (Glycyl lysine isopeptide (Lys-Gly) (interchain with G-Cter in SUMO2)). Lys304 is subject to N6-acetyllysine; alternate. Lys304 participates in a covalent cross-link: Glycyl lysine isopeptide (Lys-Gly) (interchain with G-Cter in SUMO2); alternate. Residue Lys319 forms a Glycyl lysine isopeptide (Lys-Gly) (interchain with G-Cter in SUMO2) linkage. Lys340 carries the N6-acetyllysine modification. Residue Lys366 forms a Glycyl lysine isopeptide (Lys-Gly) (interchain with G-Cter in SUMO2) linkage. An involved in binding PPP1CA region spans residues 366-370; that stretch reads KLIYF. N6-acetyllysine; alternate is present on Lys377. Lys377 is covalently cross-linked (Glycyl lysine isopeptide (Lys-Gly) (interchain with G-Cter in SUMO2); alternate). Lys377 is covalently cross-linked (Glycyl lysine isopeptide (Lys-Gly) (interchain with G-Cter in SUMO1); alternate). Residue Lys407 forms a Glycyl lysine isopeptide (Lys-Gly) (interchain with G-Cter in SUMO2) linkage. The interval 411-480 is disordered; the sequence is ERPGTNSTGP…SRSGEGEVSG (70 aa). Ser417 bears the Phosphoserine mark. Residue Lys434 forms a Glycyl lysine isopeptide (Lys-Gly) (interchain with G-Cter in SUMO2) linkage. The segment covering 434-443 has biased composition (polar residues); the sequence is KQGSGSSQPM. 3 positions are modified to phosphoserine: Ser437, Ser439, and Ser453. Lys469 participates in a covalent cross-link: Glycyl lysine isopeptide (Lys-Gly) (interchain with G-Cter in SUMO2); alternate. A Glycyl lysine isopeptide (Lys-Gly) (interchain with G-Cter in SUMO1); alternate cross-link involves residue Lys469. Citrulline is present on Arg470. Phosphoserine is present on Ser471. At Arg472 the chain carries Citrulline. Residues Ser473, Ser479, and Ser489 each carry the phosphoserine modification. Positions 476-513 are HP1 box; it reads GEVSGLMRKVPRVSLERLDLDLTADSQPPVFKVFPGST. Positions 481 to 494 match the PxVxL motif motif; it reads LMRKVPRVSLERLD. At Thr498 the chain carries Phosphothreonine. At Ser501 the chain carries Phosphoserine. Lys507 is covalently cross-linked (Glycyl lysine isopeptide (Lys-Gly) (interchain with G-Cter in SUMO2)). The residue at position 541 (Thr541) is a Phosphothreonine. Lys554 participates in a covalent cross-link: Glycyl lysine isopeptide (Lys-Gly) (interchain with G-Cter in SUMO2); alternate. A Glycyl lysine isopeptide (Lys-Gly) (interchain with G-Cter in SUMO); alternate cross-link involves residue Lys554. Lys575 is covalently cross-linked (Glycyl lysine isopeptide (Lys-Gly) (interchain with G-Cter in SUMO2)). Residues 584–618 form a disordered region; sequence GPGAEGPRLASPSGSTSSGLEVVAPEGTSAPGGGP. The residue at position 594 (Ser594) is a Phosphoserine. A PHD-type zinc finger spans residues 625–672; the sequence is ATICRVCQKPGDLVMCNQCEFCFHLDCHLPALQDVPGEEWSCSLCHVL. Lys676 participates in a covalent cross-link: Glycyl lysine isopeptide (Lys-Gly) (interchain with G-Cter in SUMO). A phosphoserine mark is found at Ser683, Ser689, and Ser697. One can recognise a Bromo domain in the interval 695–799; it reads KLSPANQRKC…RFFETRMNEA (105 aa). Lys750 is covalently cross-linked (Glycyl lysine isopeptide (Lys-Gly) (interchain with G-Cter in SUMO2); alternate). A Glycyl lysine isopeptide (Lys-Gly) (interchain with G-Cter in SUMO1); alternate cross-link involves residue Lys750. A Glycyl lysine isopeptide (Lys-Gly) (interchain with G-Cter in SUMO); alternate cross-link involves residue Lys750. Position 752 is a phosphoserine (Ser752). A Phosphotyrosine modification is found at Tyr755. Phosphoserine is present on Ser757. An N6-acetyllysine; alternate mark is found at Lys770, Lys774, and Lys779. Glycyl lysine isopeptide (Lys-Gly) (interchain with G-Cter in SUMO2); alternate cross-links involve residues Lys770, Lys774, and Lys779. A Glycyl lysine isopeptide (Lys-Gly) (interchain with G-Cter in SUMO1); alternate cross-link involves residue Lys779. Ser784 bears the Phosphoserine mark. Lys804 participates in a covalent cross-link: Glycyl lysine isopeptide (Lys-Gly) (interchain with G-Cter in SUMO2); alternate. Residue Lys804 forms a Glycyl lysine isopeptide (Lys-Gly) (interchain with G-Cter in SUMO); alternate linkage. Residues 815–835 form a disordered region; that stretch reads MSLPGAGLSSQELSGGPGDGP. Ser824 bears the Phosphoserine; by ATM and ATR and dsDNA kinase mark.

The protein belongs to the TRIM/RBCC family. Interacts with SETX. Oligomer; the RBCC domain homotrimerizes and interacts with one molecule of KRAB to form the KRAB-KAP1 corepressor complex. Binding to a KRAB domain is an absolute requirement for silencing gene expression. Interacts with CEBPB and NR3C1. Interacts with a number of KRAB-ZFP proteins including ZNF10, ZFP53, ZFP68, ZNF382 and ZNF256. Interacts with NCOR1, NR3C1 and CHD3. Interacts with CEBPB (via the RING-type and PHD-type zinc fingers). Component of a ternary complex that includes TRIM28, a HP1 protein (CBX1, CBX3 OR CBX5), a KRAB domain-containing protein, and DNA. Interacts with CBX5 (via the PxVxL motif); the interaction occurs in interphase nuclei and competes for binding POGZ. Interacts with POGZ; the interaction competes for interaction with CBX5. Interacts with SETDB1; the interaction is enhanced by KAP1 sumoylation, stimulates SETDB1 histone methyltransferase activity and gene silencing. Interacts (via the PHD-type zinc finger) with UBE2I; the interaction is required for sumoylation and repressor activity. Component of the TRIM28/KAP1-ERBB4-MDM2 complex involved in connecting growth factor and DNA damage responses. Interacts directly with ERBB4; the interaction represses ERBB4-mediated transcription activity. Interacts with MDM2; the interaction contributes to p53/TP53 inactivation. Component of the TRIM28/KAP1-MDM2-p53/TP53; involved in regulating p53/TP53 stabilization and activity. Interacts (via the leucine zipper alpha helical coiled-coil) with E2F1 (central region); the interaction inhibits E2F1 acetylation and transcriptional activity. Interacts with PPP1CA; the interaction dephosphorylates TRIM28 at Ser-824 and forms a complex at the p21 promoter site. Interacts with PPP1CB; the interaction is weak but is increased on dephosphorylation at Ser-824. Interacts with FES/FPS. Interacts with SMARCAD1. Interacts with, and sumoylates IRF7. Interacts with MAGEC2. Part of a complex composed of TRIM28, HDAC1, HDAC2 and EHMT2. Interacts with AICDA. Interacts (via the RBCC domain) with KOX1 (via the KRAB domain), ZNF268 (via the KRAB domain) and ZNF300 (via the KRAB domain); the interactions increase KOX1, ZNF268 and ZNF300 nuclear localization activities. The large PER complex involved in the histone methylation is composed of at least PER2, CBX3, TRIM28, SUV39H1 and/or SUV39H2; CBX3 mediates the formation of the complex. Interacts with isoform 2 of ZFP90. Forms a complex with FOXP3 in the presence of isoform 2 of ZFP90. Interacts with NR4A3; the interactions potentiates NR4A3 activity on NurRE promoter. Interacts (unphosphorylated or phosphorylated form) with ZBTB1 (via BTB domain). Probably part of a corepressor complex containing ZNF304, TRIM28, SETDB1 and DNMT1. Interacts with ATRX. Forms a complex with ATRX, SETDB1 and ZNF274. Interacts with ZFP568; the interaction mediates ZFP568 transcriptional repression activity. Interacts with RRP1B. Interacts with CRY1. Interacts with ZNF263; recruited to the SIX3 promoter along with other proteins involved in chromatin modification and transcriptional corepression where it contributes to transcriptional repression. Interacts with CYREN (via XLF motif). Interacts with TRIM17; this interaction prevents TRIM28 activity. Interacts with ZNF746. Interacts with PHF13. Interacts with ZNF354C. Interacts with ZNF432; the interaction is independent of PARP1. As to quaternary structure, (Microbial infection) Interacts with herpes virus 8 protein LANA1; this interaction facilitates establishment of viral latency. In terms of processing, ATM-induced phosphorylation on Ser-824 represses sumoylation leading to the de-repression of expression of a subset of genes involved in cell cycle control and apoptosis in response to genotoxic stress. Dephosphorylation by the phosphatases, PPP1CA and PP1CB forms, allows sumoylation and expression of TRIM28 target genes. Sumoylation/desumoylation events regulate TRIM28-mediated transcriptional repression. Sumoylation is required for interaction with CHD3 and SETDB1 and the corepressor activity. Represses and is repressed by Ser-824 phosphorylation. Enhances the TRIM28 corepressor activity, inhibiting transcriptional activity of a number of genes including GADD45A and CDKN1A/p21. Lys-554, Lys-779 and Lys-804 are the major sites of sumoylation. In response to Dox-induced DNA damage, enhanced phosphorylation on Ser-824 prevents sumoylation and allows de-repression of CDKN1A/p21. Post-translationally, auto-ubiquitinated; enhanced by MAGEA2 and MAGEC2. In terms of processing, citrullinated by PADI4. ADP-ribosylated by SIRT6, promoting TRIM28/KAP1 interaction with CBX5, thereby contributing to the packaging of LINE-1 retrotransposon elements into transcriptionally repressive heterochromatin. Expressed in all tissues tested including spleen, thymus, prostate, testis, ovary, small intestine, colon and peripheral blood leukocytes.

It is found in the nucleus. The catalysed reaction is S-ubiquitinyl-[E2 ubiquitin-conjugating enzyme]-L-cysteine + [acceptor protein]-L-lysine = [E2 ubiquitin-conjugating enzyme]-L-cysteine + N(6)-ubiquitinyl-[acceptor protein]-L-lysine.. The protein operates within protein modification; protein sumoylation. Nuclear corepressor for KRAB domain-containing zinc finger proteins (KRAB-ZFPs). Mediates gene silencing by recruiting CHD3, a subunit of the nucleosome remodeling and deacetylation (NuRD) complex, and SETDB1 (which specifically methylates histone H3 at 'Lys-9' (H3K9me)) to the promoter regions of KRAB target genes. Enhances transcriptional repression by coordinating the increase in H3K9me, the decrease in histone H3 'Lys-9 and 'Lys-14' acetylation (H3K9ac and H3K14ac, respectively) and the disposition of HP1 proteins to silence gene expression. Recruitment of SETDB1 induces heterochromatinization. May play a role as a coactivator for CEBPB and NR3C1 in the transcriptional activation of ORM1. Also a corepressor for ERBB4. Inhibits E2F1 activity by stimulating E2F1-HDAC1 complex formation and inhibiting E2F1 acetylation. May serve as a partial backup to prevent E2F1-mediated apoptosis in the absence of RB1. Important regulator of CDKN1A/p21(CIP1). Has E3 SUMO-protein ligase activity toward itself via its PHD-type zinc finger. Also specifically sumoylates IRF7, thereby inhibiting its transactivation activity. Ubiquitinates p53/TP53 leading to its proteasomal degradation; the function is enhanced by MAGEC2 and MAGEA2, and possibly MAGEA3 and MAGEA6. Mediates the nuclear localization of KOX1, ZNF268 and ZNF300 transcription factors. In association with isoform 2 of ZFP90, is required for the transcriptional repressor activity of FOXP3 and the suppressive function of regulatory T-cells (Treg). Probably forms a corepressor complex required for activated KRAS-mediated promoter hypermethylation and transcriptional silencing of tumor suppressor genes (TSGs) or other tumor-related genes in colorectal cancer (CRC) cells. Required to maintain a transcriptionally repressive state of genes in undifferentiated embryonic stem cells (ESCs). In ESCs, in collaboration with SETDB1, is also required for H3K9me3 and silencing of endogenous and introduced retroviruses in a DNA-methylation independent-pathway. Associates at promoter regions of tumor suppressor genes (TSGs) leading to their gene silencing. The SETDB1-TRIM28-ZNF274 complex may play a role in recruiting ATRX to the 3'-exons of zinc-finger coding genes with atypical chromatin signatures to establish or maintain/protect H3K9me3 at these transcriptionally active regions. Its function is as follows. (Microbial infection) Plays a critical role in the shutdown of lytic gene expression during the early stage of herpes virus 8 primary infection. This inhibition is mediated through interaction with herpes virus 8 protein LANA1. The sequence is that of Transcription intermediary factor 1-beta from Homo sapiens (Human).